The primary structure comprises 172 residues: Ubiquitin-conjugating enzyme E2 2 (172 aa).

In terms of domain architecture, UBC core spans 4 to 150 (PARRRLMRDF…VKETVEKSWE (147 aa)). The active-site Glycyl thioester intermediate is the Cys-88. Ser-120 carries the post-translational modification Phosphoserine; by SGV1. The interval 145–172 (VEKSWEDDMDDMDDDDDDDDDDDDDEAD) is disordered. Acidic residues predominate over residues 151 to 172 (DDMDDMDDDDDDDDDDDDDEAD).

It belongs to the ubiquitin-conjugating enzyme family. As to quaternary structure, forms a heterodimer complexes with the E3 enzymes BRE1, RAD18 and UBR1. Also interacts with UBR2, RTF1, PAF1 and the RNA polymerase II hyperphosphorylated form. The interaction with RNA polymerase II is BRE1- and PAF1-dependent. The N-terminus is blocked.

It localises to the cytoplasm. Its subcellular location is the nucleus. The enzyme catalyses S-ubiquitinyl-[E1 ubiquitin-activating enzyme]-L-cysteine + [E2 ubiquitin-conjugating enzyme]-L-cysteine = [E1 ubiquitin-activating enzyme]-L-cysteine + S-ubiquitinyl-[E2 ubiquitin-conjugating enzyme]-L-cysteine.. The protein operates within protein modification; protein ubiquitination. Its function is as follows. E2 ubiquitin-conjugating enzyme that accepts ubiquitin from the ubiquitin-activating enzyme E1 and transfers it to a E3 ubiquitin-protein ligase. In association with the E3 enzyme BRE1 and LGE1, it plays a role in transcription regulation by catalyzing the monoubiquitination of histone H2B to form H2BK123ub1. H2BK123ub1 gives a specific tag for epigenetic transcriptional activation, elongation by RNA polymerase II, telomeric silencing, and is also a prerequisite for H3K4me and H3K79me formation. In association with the E3 enzyme RAD18, it catalyzes the monoubiquitination of POL30 'Lys-164', involved in postreplication repair of UV-damaged DNA. The RAD6/UBC2-RAD18 complex is also involved in prevention of spontaneous mutations caused by 7,8-dihydro-8-oxoguanine. In association with the E3 enzyme UBR1, is involved in N-end rule-dependent protein degradation. Also involved in sporulation. The polypeptide is Ubiquitin-conjugating enzyme E2 2 (RAD6) (Saccharomyces cerevisiae (strain ATCC 204508 / S288c) (Baker's yeast)).